Reading from the N-terminus, the 231-residue chain is GSK-3-binding protein FRAT2 (231 aa).

Disordered regions lie at residues 1-24 (MPCR…DDSF) and 53-109 (DTAH…PGAV). A compositionally biased stretch (acidic residues) spans 7-23 (EEEEAGDEAEGEEDDDS). The involved in GSK-3 binding stretch occupies residues 172 to 194 (DPHRLLQQLVLSGNLIKEAVRRL). A disordered region spans residues 203–231 (ATSPASAPGSGGGRSGPDSVTLQPSGAWL).

The protein belongs to the GSK-3-binding protein family. Binds GSK-3 and prevents GSK-3-dependent phosphorylation.

Functionally, positively regulates the Wnt signaling pathway by stabilizing beta-catenin through the association with GSK-3. The chain is GSK-3-binding protein FRAT2 (Frat2) from Mus musculus (Mouse).